A 197-amino-acid chain; its full sequence is Fe/S biogenesis protein NfuA (197 aa).

The [4Fe-4S] cluster site is built by C155 and C158.

This sequence belongs to the NfuA family. As to quaternary structure, homodimer. [4Fe-4S] cluster is required as a cofactor.

In terms of biological role, involved in iron-sulfur cluster biogenesis. Binds a 4Fe-4S cluster, can transfer this cluster to apoproteins, and thereby intervenes in the maturation of Fe/S proteins. Could also act as a scaffold/chaperone for damaged Fe/S proteins. The protein is Fe/S biogenesis protein NfuA of Pseudomonas savastanoi pv. phaseolicola (strain 1448A / Race 6) (Pseudomonas syringae pv. phaseolicola (strain 1448A / Race 6)).